Reading from the N-terminus, the 159-residue chain is Trafficking protein particle complex subunit 6A (159 aa).

Ser-33 bears the Phosphoserine mark.

The protein belongs to the TRAPP small subunits family. BET3 subfamily. In terms of assembly, part of the multisubunit transport protein particle (TRAPP) complex. Heterodimer with TRAPPC3. The heterodimer TRAPPC3-TRAPPC6A interacts with TRAPPC2L. Interacts with TRAPPC2L.

Its subcellular location is the golgi apparatus. The protein localises to the cis-Golgi network. It is found in the endoplasmic reticulum. Functionally, may play a role in vesicular transport during the biogenesis of melanosomes. The sequence is that of Trafficking protein particle complex subunit 6A from Bos taurus (Bovine).